The sequence spans 602 residues: UPF0329 protein ECU02_0060 (602 aa).

The segment covering 313–345 (EEDERKRAEAESARNREELLRMEEREKGKEKGS) has biased composition (basic and acidic residues). The segment at 313–407 (EEDERKRAEA…SPKEESKGEE (95 aa)) is disordered. Residues 346–356 (KGKGRKKRGKK) show a composition bias toward basic residues. Residues 357-369 (GAGEAKEESKEED) show a composition bias toward basic and acidic residues. Residues 370–384 (RGGEEEESVEADVPV) show a composition bias toward acidic residues.

The protein belongs to the UPF0329 family.

This is UPF0329 protein ECU02_0060 from Encephalitozoon cuniculi (strain GB-M1) (Microsporidian parasite).